A 242-amino-acid polypeptide reads, in one-letter code: Probable transcriptional regulatory protein XOO1543 (242 aa).

This sequence belongs to the TACO1 family.

It localises to the cytoplasm. This Xanthomonas oryzae pv. oryzae (strain MAFF 311018) protein is Probable transcriptional regulatory protein XOO1543.